The primary structure comprises 877 residues: Alanine--tRNA ligase (877 aa).

Zn(2+)-binding residues include His564, His568, Cys666, and His670.

The protein belongs to the class-II aminoacyl-tRNA synthetase family. Zn(2+) is required as a cofactor.

Its subcellular location is the cytoplasm. The catalysed reaction is tRNA(Ala) + L-alanine + ATP = L-alanyl-tRNA(Ala) + AMP + diphosphate. Functionally, catalyzes the attachment of alanine to tRNA(Ala) in a two-step reaction: alanine is first activated by ATP to form Ala-AMP and then transferred to the acceptor end of tRNA(Ala). Also edits incorrectly charged Ser-tRNA(Ala) and Gly-tRNA(Ala) via its editing domain. This Pelotomaculum thermopropionicum (strain DSM 13744 / JCM 10971 / SI) protein is Alanine--tRNA ligase.